The sequence spans 331 residues: UPF0324 membrane protein SA0329 (331 aa).

The next 11 membrane-spanning stretches (helical) occupy residues 9 to 26 (FMIGLSLTFIVALFSFLA), 31 to 48 (ILDKVGALTIAILIAILY), 69 to 88 (LLRFAIILYGLKLNIFDIIG), 93 to 115 (LLAIDVGVVIFSIVMMLFVNKLL), 122 to 144 (ALLLGVGTGVCGAAAIAAVAPIF), 154 to 176 (SIGIIALIGTIFSLIYTAIYAIF), 183 to 202 (YGAWSGVSLHEIAHVVLAGG), 217 to 234 (LGRVFLLIPLTIVLILIM), 247 to 269 (ISIPYFLIGFVIMALVNTYVTIP), 273 to 295 (LNILNTISTICLLMAMVALGLNV), and 308 to 330 (LMTIIITSICLSSLAFIVVHWLY).

Belongs to the UPF0324 family.

It is found in the cell membrane. This chain is UPF0324 membrane protein SA0329, found in Staphylococcus aureus (strain N315).